The sequence spans 162 residues: Ribosome maturation factor RimP (162 aa).

Belongs to the RimP family.

The protein resides in the cytoplasm. In terms of biological role, required for maturation of 30S ribosomal subunits. In Cupriavidus taiwanensis (strain DSM 17343 / BCRC 17206 / CCUG 44338 / CIP 107171 / LMG 19424 / R1) (Ralstonia taiwanensis (strain LMG 19424)), this protein is Ribosome maturation factor RimP.